A 231-amino-acid chain; its full sequence is Ion-translocating oxidoreductase complex subunit E (231 aa).

6 helical membrane passes run 18–38 (ALVQ…ATNA), 39–59 (LGLG…ISTL), 63–83 (TPAE…VSAV), 86–106 (LINA…PLIV), 125–145 (ALSA…MFVL), and 182–202 (PFLL…MLAG).

This sequence belongs to the NqrDE/RnfAE family. In terms of assembly, the complex is composed of six subunits: RsxA, RsxB, RsxC, RsxD, RsxE and RsxG.

The protein localises to the cell inner membrane. In terms of biological role, part of a membrane-bound complex that couples electron transfer with translocation of ions across the membrane. Required to maintain the reduced state of SoxR. This chain is Ion-translocating oxidoreductase complex subunit E, found in Escherichia coli O7:K1 (strain IAI39 / ExPEC).